Reading from the N-terminus, the 396-residue chain is Elongation factor Tu (396 aa).

The 196-residue stretch at 10–205 (KPHVNIGTIG…AVDESIPDPV (196 aa)) folds into the tr-type G domain. The interval 19–26 (GHVDHGKT) is G1. 19 to 26 (GHVDHGKT) is a GTP binding site. T26 provides a ligand contact to Mg(2+). Residues 62–66 (GITIN) form a G2 region. Residues 83-86 (DAPG) are G3. Residues 83 to 87 (DAPGH) and 138 to 141 (NKAD) each bind GTP. The G4 stretch occupies residues 138 to 141 (NKAD). Positions 175-177 (SAL) are G5.

It belongs to the TRAFAC class translation factor GTPase superfamily. Classic translation factor GTPase family. EF-Tu/EF-1A subfamily. In terms of assembly, monomer.

The protein localises to the cytoplasm. The enzyme catalyses GTP + H2O = GDP + phosphate + H(+). Functionally, GTP hydrolase that promotes the GTP-dependent binding of aminoacyl-tRNA to the A-site of ribosomes during protein biosynthesis. This is Elongation factor Tu from Mycobacterium avium (strain 104).